We begin with the raw amino-acid sequence, 556 residues long: Formate--tetrahydrofolate ligase (556 aa).

65–72 is an ATP binding site; that stretch reads TPAGEGKS.

This sequence belongs to the formate--tetrahydrofolate ligase family.

The catalysed reaction is (6S)-5,6,7,8-tetrahydrofolate + formate + ATP = (6R)-10-formyltetrahydrofolate + ADP + phosphate. Its pathway is one-carbon metabolism; tetrahydrofolate interconversion. The polypeptide is Formate--tetrahydrofolate ligase (Streptococcus thermophilus (strain ATCC BAA-250 / LMG 18311)).